The following is a 456-amino-acid chain: Glycerol-3-phosphate acyltransferase 4 (456 aa).

A signal peptide spans 1-37 (MFLLLPFDSLIVSLLGISLTVLFTLLLVFIIVPAVFG). 2 helical membrane passes run 156–176 (ISLR…CLLL) and 180–200 (IALA…VGYL). Asn-247 carries an N-linked (GlcNAc...) asparagine glycan. An HXXXXD motif motif is present at residues 248–253 (HTSPID). Residues Asn-327, Asn-328, and Asn-362 are each glycosylated (N-linked (GlcNAc...) asparagine).

This sequence belongs to the 1-acyl-sn-glycerol-3-phosphate acyltransferase family.

The protein resides in the endoplasmic reticulum membrane. The enzyme catalyses sn-glycerol 3-phosphate + an acyl-CoA = a 1-acyl-sn-glycero-3-phosphate + CoA. It carries out the reaction dodecanoyl-CoA + sn-glycerol 3-phosphate = 1-dodecanoyl-sn-glycerol 3-phosphate + CoA. It catalyses the reaction sn-glycerol 3-phosphate + hexadecanoyl-CoA = 1-hexadecanoyl-sn-glycero-3-phosphate + CoA. The catalysed reaction is sn-glycerol 3-phosphate + octadecanoyl-CoA = 1-octadecanoyl-sn-glycero-3-phosphate + CoA. The enzyme catalyses sn-glycerol 3-phosphate + (9Z)-octadecenoyl-CoA = 1-(9Z-octadecenoyl)-sn-glycero-3-phosphate + CoA. It carries out the reaction (9Z,12Z)-octadecadienoyl-CoA + sn-glycerol 3-phosphate = 1-(9Z,12Z)-octadecadienoyl-sn-glycero-3-phosphate + CoA. The protein operates within phospholipid metabolism; CDP-diacylglycerol biosynthesis; CDP-diacylglycerol from sn-glycerol 3-phosphate: step 1/3. Converts glycerol-3-phosphate to 1-acyl-sn-glycerol-3-phosphate (lysophosphatidic acid or LPA) by incorporating an acyl moiety at the sn-1 position of the glycerol backbone. Active against both saturated and unsaturated long-chain fatty acyl-CoAs. Protects cells against lipotoxicity. In Bos taurus (Bovine), this protein is Glycerol-3-phosphate acyltransferase 4.